Reading from the N-terminus, the 146-residue chain is Snake venom vascular endothelial growth factor toxin TfsvVEGF (146 aa).

Positions 1–24 (MAAYLLAVAILFCIQGWPSGTVQG) are cleaved as a signal peptide. The residue at position 25 (glutamine 25) is a Pyrrolidone carboxylic acid. Disulfide bonds link cysteine 38–cysteine 80, cysteine 69–cysteine 115, and cysteine 73–cysteine 117. Over residues 118–139 (RPRSPGDVNNGKDKRNPEEGGP) the composition is skewed to basic and acidic residues. The interval 118–146 (RPRSPGDVNNGKDKRNPEEGGPRARFPFV) is disordered.

It belongs to the PDGF/VEGF growth factor family. Snake venom VEGF subfamily. In terms of assembly, homodimer; disulfide-linked. Interacts with VEGF receptor-1 (FLT1) with a high affinity, whereas it binds to VEGF receptor-2 (KDR) with a low affinity. Does not bind VEGF receptor-3 (FLT4). In terms of tissue distribution, expressed by the venom gland.

The protein resides in the secreted. Functionally, snake venom VEGFs may contribute to venom dispersion and prey subjugation by inducing vascular permeability and hypotension. This protein strongly increases vascular permeability, and weakly stimulates angiogenesis. Interacts with VEGF receptor-1 (FLT1) with a high affinity, whereas it binds to VEGF receptor-2 (KDR) with a low affinity. Stimulates autophosphorylation of VEGF receptor-1 (VEGFR-1/FLT1), and VEGF receptor-2 (VEGFR-2/KDR). This Protobothrops flavoviridis (Habu) protein is Snake venom vascular endothelial growth factor toxin TfsvVEGF.